A 164-amino-acid polypeptide reads, in one-letter code: Large ribosomal subunit protein uL10 (164 aa).

The protein belongs to the universal ribosomal protein uL10 family. Part of the ribosomal stalk of the 50S ribosomal subunit. The N-terminus interacts with L11 and the large rRNA to form the base of the stalk. The C-terminus forms an elongated spine to which L12 dimers bind in a sequential fashion forming a multimeric L10(L12)X complex.

Its function is as follows. Forms part of the ribosomal stalk, playing a central role in the interaction of the ribosome with GTP-bound translation factors. This Aliivibrio fischeri (strain MJ11) (Vibrio fischeri) protein is Large ribosomal subunit protein uL10.